Here is a 341-residue protein sequence, read N- to C-terminus: Ketol-acid reductoisomerase (NADP(+)) (341 aa).

In terms of domain architecture, KARI N-terminal Rossmann spans 1 to 182 (MTEMFYDDDA…GGTRAGVIKT (182 aa)). NADP(+)-binding positions include 25 to 28 (YGSQ), Lys48, Ser51, Ser53, and 83 to 86 (DQHQ). His108 is a catalytic residue. Residue Gly134 participates in NADP(+) binding. The region spanning 183–328 (TFTEETETDL…RELRSLFSWQ (146 aa)) is the KARI C-terminal knotted domain. The Mg(2+) site is built by Asp191, Glu195, Glu227, and Glu231. Residue Ser252 coordinates substrate.

It belongs to the ketol-acid reductoisomerase family. Mg(2+) is required as a cofactor.

The catalysed reaction is (2R)-2,3-dihydroxy-3-methylbutanoate + NADP(+) = (2S)-2-acetolactate + NADPH + H(+). It catalyses the reaction (2R,3R)-2,3-dihydroxy-3-methylpentanoate + NADP(+) = (S)-2-ethyl-2-hydroxy-3-oxobutanoate + NADPH + H(+). It functions in the pathway amino-acid biosynthesis; L-isoleucine biosynthesis; L-isoleucine from 2-oxobutanoate: step 2/4. Its pathway is amino-acid biosynthesis; L-valine biosynthesis; L-valine from pyruvate: step 2/4. Functionally, involved in the biosynthesis of branched-chain amino acids (BCAA). Catalyzes an alkyl-migration followed by a ketol-acid reduction of (S)-2-acetolactate (S2AL) to yield (R)-2,3-dihydroxy-isovalerate. In the isomerase reaction, S2AL is rearranged via a Mg-dependent methyl migration to produce 3-hydroxy-3-methyl-2-ketobutyrate (HMKB). In the reductase reaction, this 2-ketoacid undergoes a metal-dependent reduction by NADPH to yield (R)-2,3-dihydroxy-isovalerate. The sequence is that of Ketol-acid reductoisomerase (NADP(+)) from Pseudarthrobacter chlorophenolicus (strain ATCC 700700 / DSM 12829 / CIP 107037 / JCM 12360 / KCTC 9906 / NCIMB 13794 / A6) (Arthrobacter chlorophenolicus).